The following is a 46-amino-acid chain: Succinate dehydrogenase subunit 8, mitochondrial (46 aa).

As to quaternary structure, component of complex II composed of eight subunits in plants: four classical SDH subunits SDH1, SDH2, SDH3 and SDH4 (a flavoprotein (FP), an iron-sulfur protein (IP), and a cytochrome b composed of a large and a small subunit.), as well as four subunits unknown in mitochondria from bacteria and heterotrophic eukaryotes.

Its subcellular location is the mitochondrion inner membrane. It participates in carbohydrate metabolism; tricarboxylic acid cycle. This is Succinate dehydrogenase subunit 8, mitochondrial from Arabidopsis thaliana (Mouse-ear cress).